The primary structure comprises 114 residues: UPF0342 protein NWMN_1737 (114 aa).

Belongs to the UPF0342 family.

The protein is UPF0342 protein NWMN_1737 of Staphylococcus aureus (strain Newman).